The sequence spans 577 residues: ATP-dependent zinc metalloprotease FtsH (577 aa).

Topologically, residues M1–K3 are cytoplasmic. A helical transmembrane segment spans residues L4–H24. Over L25 to S98 the chain is Extracellular. A helical transmembrane segment spans residues A99–I119. Topologically, residues R120–V577 are cytoplasmic. ATP is bound at residue G186 to T193. H409 is a binding site for Zn(2+). Residue E410 is part of the active site. Zn(2+) is bound by residues H413 and D487.

This sequence in the central section; belongs to the AAA ATPase family. In the C-terminal section; belongs to the peptidase M41 family. In terms of assembly, homohexamer. Requires Zn(2+) as cofactor.

It is found in the cell membrane. Acts as a processive, ATP-dependent zinc metallopeptidase for both cytoplasmic and membrane proteins. Plays a role in the quality control of integral membrane proteins. This is ATP-dependent zinc metalloprotease FtsH from Lachnoclostridium phytofermentans (strain ATCC 700394 / DSM 18823 / ISDg) (Clostridium phytofermentans).